The sequence spans 505 residues: ATP synthase subunit alpha, chloroplastic (505 aa).

ATP is bound at residue 170–177 (GDRQTGKT).

It belongs to the ATPase alpha/beta chains family. As to quaternary structure, F-type ATPases have 2 components, CF(1) - the catalytic core - and CF(0) - the membrane proton channel. CF(1) has five subunits: alpha(3), beta(3), gamma(1), delta(1), epsilon(1). CF(0) has four main subunits: a, b, b' and c.

It is found in the plastid. The protein localises to the chloroplast thylakoid membrane. It carries out the reaction ATP + H2O + 4 H(+)(in) = ADP + phosphate + 5 H(+)(out). Produces ATP from ADP in the presence of a proton gradient across the membrane. The alpha chain is a regulatory subunit. The chain is ATP synthase subunit alpha, chloroplastic from Oenothera elata subsp. hookeri (Hooker's evening primrose).